The chain runs to 1373 residues: DNA-directed RNA polymerase subunit beta (1373 aa).

Belongs to the RNA polymerase beta chain family. In terms of assembly, the RNAP catalytic core consists of 2 alpha, 1 beta, 1 beta' and 1 omega subunit. When a sigma factor is associated with the core the holoenzyme is formed, which can initiate transcription.

The enzyme catalyses RNA(n) + a ribonucleoside 5'-triphosphate = RNA(n+1) + diphosphate. DNA-dependent RNA polymerase catalyzes the transcription of DNA into RNA using the four ribonucleoside triphosphates as substrates. In Rickettsia akari (strain Hartford), this protein is DNA-directed RNA polymerase subunit beta.